The primary structure comprises 185 residues: Nodulin-20 (185 aa).

Positions Met1–Ala17 are cleaved as a signal peptide.

Belongs to the nodulin 20 family.

It localises to the symbiosome. It is found in the peribacteroid membrane. Its subcellular location is the peribacteroid space. The protein is Nodulin-20 of Glycine max (Soybean).